The following is a 535-amino-acid chain: Suppressor of cytokine signaling 6 (535 aa).

Basic residues predominate over residues 80–89 (RLSAKQKSKG). Residues 80 to 105 (RLSAKQKSKGKAGTPSGSSADEDTFS) form a disordered region. An SH2 domain is found at 384-491 (WYWGPITRWE…TYPVRLTNPV (108 aa)). An SOCS box domain is found at 486–535 (RLTNPVSRFMQVRSLQYLCRFVIRQYTRIDLIQKLPLPNKMKDYLQEKHY).

Interacts with RBCK1. Interacts with phosphorylated IRS4. Interacts with PIM3. Interacts with KIT (phosphorylated).

Its pathway is protein modification; protein ubiquitination. SOCS family proteins form part of a classical negative feedback system that regulates cytokine signal transduction. May be a substrate recognition component of a SCF-like ECS (Elongin BC-CUL2/5-SOCS-box protein) E3 ubiquitin-protein ligase complex which mediates the ubiquitination and subsequent proteasomal degradation of target proteins. Regulates KIT degradation by ubiquitination of the tyrosine-phosphorylated receptor. The protein is Suppressor of cytokine signaling 6 (SOCS6) of Homo sapiens (Human).